The primary structure comprises 326 residues: Vitamin B12 import system permease protein BtuC (326 aa).

9 helical membrane-spanning segments follow: residues 15–35, 61–81, 88–108, 112–132, 146–166, 184–204, 240–260, 274–294, and 302–322; these read WLLS…CAGE, LAVL…QALF, PGLL…VLLG, LPGW…TLIL, LLAG…AIYF, GGVD…LIWI, GWMV…GLVI, VLLP…DVVA, and ELPI…WLLL.

This sequence belongs to the binding-protein-dependent transport system permease family. FecCD subfamily. The complex is composed of two ATP-binding proteins (BtuD), two transmembrane proteins (BtuC) and a solute-binding protein (BtuF).

It is found in the cell inner membrane. Functionally, part of the ABC transporter complex BtuCDF involved in vitamin B12 import. Involved in the translocation of the substrate across the membrane. In Salmonella agona (strain SL483), this protein is Vitamin B12 import system permease protein BtuC.